The primary structure comprises 637 residues: MVGSKMAASIRERQTVALKRMLNFNVPHVKNSPGEPVWKVLIYDRFGQDIISPLLSVKELRDMGITLHLLLHSDRDPIRDVPAVYFVMPTEENIDRLCQDLRNQLYESYYLNFISAISRSKLEDIANAALAANAVTQVAKVFDQYLNFITLEEDMFVLCNQNKELVSYRAINRPDITDTEMETVMDTIVDSLFCFFVTLGAVPIIRCSRGTAAEMVAVKLDKKLRENLRDARNSLFTGDPLGTGQFSFQRPLLVLVDRNIDLATPLHHTWTYQALVHDVLDFHLNRVNLEESTGVENSPTGARPKRKNKKSYDLTPVDKFWQKHKGSPFPEVAESVQQELESYRAQEDEVKRLKSIMGLEGEDEGAISMLSDNTAKLTSAVSSLPELLEKKRLIDLHTNVATAVLEHIKARKLDVYFEYEEKIMSKTTLDKSLLDVISDPDAGTPEDKMRLFLIYYISAQQAPSEVDLEQYKKALTDAGCNLSPLQYIKQWKAFAKMASTPASYGNTTTKPMGLLSRVMNTGSQFVMEGVKNLVLKQQNLPVTRILDNLMEMKSNPETDDYRYFDPKMLRSNDSSVPRNKSPFQEAIVFVVGGGNYIEYQNLVDYIKGKQGKHILYGCSEIFNATQFIKQLSQLGQK.

Phosphoserine is present on residues Ser32, Ser298, and Ser523.

It belongs to the STXBP/unc-18/SEC1 family. Interacts with STX17. Interacts with the COG complex via COG4. Interacts with STX5A. Highly expressed in testis. Detected at lower levels in brain, astrocytes, heart and small intestine.

It localises to the cytoplasm. The protein resides in the endoplasmic reticulum membrane. The protein localises to the golgi apparatus. Its subcellular location is the golgi stack membrane. Its function is as follows. Plays a role in SNARE-pin assembly and Golgi-to-ER retrograde transport via its interaction with COG4. Involved in vesicular transport between the endoplasmic reticulum and the Golgi. The sequence is that of Sec1 family domain-containing protein 1 (Scfd1) from Rattus norvegicus (Rat).